The primary structure comprises 371 residues: Aspartate-semialdehyde dehydrogenase (371 aa).

NADP(+) contacts are provided by residues 10 to 13 (RGMV), 37 to 38 (TS), and Q74. Position 103 (R103) interacts with phosphate. Residue C136 is the Acyl-thioester intermediate of the active site. Q163 is a substrate binding site. S166 contacts NADP(+). E243 serves as a coordination point for substrate. K246 contacts phosphate. R270 lines the substrate pocket. H277 serves as the catalytic Proton acceptor. Q353 provides a ligand contact to NADP(+).

The protein belongs to the aspartate-semialdehyde dehydrogenase family. Homodimer.

It catalyses the reaction L-aspartate 4-semialdehyde + phosphate + NADP(+) = 4-phospho-L-aspartate + NADPH + H(+). The protein operates within amino-acid biosynthesis; L-lysine biosynthesis via DAP pathway; (S)-tetrahydrodipicolinate from L-aspartate: step 2/4. It participates in amino-acid biosynthesis; L-methionine biosynthesis via de novo pathway; L-homoserine from L-aspartate: step 2/3. Its pathway is amino-acid biosynthesis; L-threonine biosynthesis; L-threonine from L-aspartate: step 2/5. In terms of biological role, catalyzes the NADPH-dependent formation of L-aspartate-semialdehyde (L-ASA) by the reductive dephosphorylation of L-aspartyl-4-phosphate. The sequence is that of Aspartate-semialdehyde dehydrogenase from Haemophilus influenzae (strain ATCC 51907 / DSM 11121 / KW20 / Rd).